Reading from the N-terminus, the 485-residue chain is Glutamyl-tRNA(Gln) amidotransferase subunit A (485 aa).

Residues Lys-78 and Ser-153 each act as charge relay system in the active site. The active-site Acyl-ester intermediate is the Ser-177.

It belongs to the amidase family. GatA subfamily. In terms of assembly, heterotrimer of A, B and C subunits.

It catalyses the reaction L-glutamyl-tRNA(Gln) + L-glutamine + ATP + H2O = L-glutaminyl-tRNA(Gln) + L-glutamate + ADP + phosphate + H(+). In terms of biological role, allows the formation of correctly charged Gln-tRNA(Gln) through the transamidation of misacylated Glu-tRNA(Gln) in organisms which lack glutaminyl-tRNA synthetase. The reaction takes place in the presence of glutamine and ATP through an activated gamma-phospho-Glu-tRNA(Gln). The protein is Glutamyl-tRNA(Gln) amidotransferase subunit A of Bacillus cereus (strain 03BB102).